A 587-amino-acid polypeptide reads, in one-letter code: Pyruvate decarboxylase 3 (587 aa).

Residues aspartate 48 and histidine 135 each coordinate substrate. Residues 415-496 (DSWFNCQKLR…FLINNGGYTI (82 aa)) are thiamine pyrophosphate binding. Mg(2+) is bound by residues aspartate 464, asparagine 491, and glycine 493. Residue glutamate 497 coordinates substrate.

The protein belongs to the TPP enzyme family. As to quaternary structure, homotetramer. A metal cation is required as a cofactor. It depends on thiamine diphosphate as a cofactor.

It catalyses the reaction a 2-oxocarboxylate + H(+) = an aldehyde + CO2. This is Pyruvate decarboxylase 3 (PDC3) from Oryza sativa subsp. indica (Rice).